Reading from the N-terminus, the 414-residue chain is NADH-ubiquinone oxidoreductase chain 4 (414 aa).

Transmembrane regions (helical) follow at residues 18–38, 47–67, 96–116, 126–146, 160–180, 188–208, 216–236, 254–274, 293–313, and 375–395; these read LVQL…MIGV, IAAF…LMSI, IIFI…PLHL, PTAG…YGYI, YFPI…IATL, IVAY…FSGV, IILM…IGVI, MMPI…AFPI, IIIA…SFWL, and VNIF…IVGM.

The protein belongs to the complex I subunit 4 family.

Its subcellular location is the mitochondrion membrane. It catalyses the reaction a ubiquinone + NADH + 5 H(+)(in) = a ubiquinol + NAD(+) + 4 H(+)(out). Core subunit of the mitochondrial membrane respiratory chain NADH dehydrogenase (Complex I) that is believed to belong to the minimal assembly required for catalysis. Complex I functions in the transfer of electrons from NADH to the respiratory chain. The immediate electron acceptor for the enzyme is believed to be ubiquinone. The sequence is that of NADH-ubiquinone oxidoreductase chain 4 (nad4) from Dictyostelium citrinum (Slime mold).